The chain runs to 180 residues: Pro-glucagon (180 aa).

The first 20 residues, Met-1–Gln-20, serve as a signal peptide directing secretion. Positions Pro-23 to Thr-59 are disordered. A Phosphoserine modification is found at Ser-54. Positions Asn-84–Ala-89 are excised as a propeptide. Ser-105 and Ser-108 each carry phosphoserine. The residue at position 127 (Arg-127) is an Arginine amide. Residues Asp-131–Arg-145 constitute a propeptide that is removed on maturation. Residues Ser-150 and Ser-152 each carry the phosphoserine modification.

It belongs to the glucagon family. Proglucagon is post-translationally processed in a tissue-specific manner in pancreatic A cells and intestinal L cells. In pancreatic A cells, the major bioactive hormone is glucagon cleaved by PCSK2/PC2. In the intestinal L cells PCSK1/PC1 liberates GLP-1, GLP-2, glicentin and oxyntomodulin. GLP-1 is further N-terminally truncated by post-translational processing in the intestinal L cells resulting in GLP-1(7-37) GLP-1-(7-36)amide. The C-terminal amidation is neither important for the metabolism of GLP-1 nor for its effects on the endocrine pancreas. Glucagon is secreted in the A cells of the islets of Langerhans. GLP-1, GLP-2, oxyntomodulin and glicentin are secreted from enteroendocrine cells throughout the gastrointestinal tract.

The protein resides in the secreted. Plays a key role in glucose metabolism and homeostasis. Regulates blood glucose by increasing gluconeogenesis and decreasing glycolysis. A counterregulatory hormone of insulin, raises plasma glucose levels in response to insulin-induced hypoglycemia. Plays an important role in initiating and maintaining hyperglycemic conditions in diabetes. In terms of biological role, potent stimulator of glucose-dependent insulin release. Also stimulates insulin release in response to IL6. Plays important roles on gastric motility and the suppression of plasma glucagon levels. May be involved in the suppression of satiety and stimulation of glucose disposal in peripheral tissues, independent of the actions of insulin. Has growth-promoting activities on intestinal epithelium. May also regulate the hypothalamic pituitary axis (HPA) via effects on LH, TSH, CRH, oxytocin, and vasopressin secretion. Increases islet mass through stimulation of islet neogenesis and pancreatic beta cell proliferation. Inhibits beta cell apoptosis. Functionally, stimulates intestinal growth and up-regulates villus height in the small intestine, concomitant with increased crypt cell proliferation and decreased enterocyte apoptosis. The gastrointestinal tract, from the stomach to the colon is the principal target for GLP-2 action. Plays a key role in nutrient homeostasis, enhancing nutrient assimilation through enhanced gastrointestinal function, as well as increasing nutrient disposal. Stimulates intestinal glucose transport and decreases mucosal permeability. Its function is as follows. May modulate gastric acid secretion and the gastro-pyloro-duodenal activity. May play an important role in intestinal mucosal growth in the early period of life. Oxyntomodulin significantly reduces food intake. The sequence is that of Pro-glucagon (Gcg) from Rattus norvegicus (Rat).